Here is a 297-residue protein sequence, read N- to C-terminus: Ribosomal protein L11 methyltransferase (297 aa).

Positions 150, 171, 193, and 233 each coordinate S-adenosyl-L-methionine.

The protein belongs to the methyltransferase superfamily. PrmA family.

The protein resides in the cytoplasm. It carries out the reaction L-lysyl-[protein] + 3 S-adenosyl-L-methionine = N(6),N(6),N(6)-trimethyl-L-lysyl-[protein] + 3 S-adenosyl-L-homocysteine + 3 H(+). Its function is as follows. Methylates ribosomal protein L11. The chain is Ribosomal protein L11 methyltransferase from Laribacter hongkongensis (strain HLHK9).